We begin with the raw amino-acid sequence, 208 residues long: Small ribosomal subunit protein uS4 (208 aa).

In terms of domain architecture, S4 RNA-binding spans Arg95–Asn157.

It belongs to the universal ribosomal protein uS4 family. As to quaternary structure, part of the 30S ribosomal subunit. Contacts protein S5. The interaction surface between S4 and S5 is involved in control of translational fidelity.

In terms of biological role, one of the primary rRNA binding proteins, it binds directly to 16S rRNA where it nucleates assembly of the body of the 30S subunit. With S5 and S12 plays an important role in translational accuracy. The protein is Small ribosomal subunit protein uS4 of Borreliella burgdorferi (strain ATCC 35210 / DSM 4680 / CIP 102532 / B31) (Borrelia burgdorferi).